The primary structure comprises 502 residues: Aspartyl/glutamyl-tRNA(Asn/Gln) amidotransferase subunit B (502 aa).

This sequence belongs to the GatB/GatE family. GatB subfamily. As to quaternary structure, heterotrimer of A, B and C subunits.

The enzyme catalyses L-glutamyl-tRNA(Gln) + L-glutamine + ATP + H2O = L-glutaminyl-tRNA(Gln) + L-glutamate + ADP + phosphate + H(+). It carries out the reaction L-aspartyl-tRNA(Asn) + L-glutamine + ATP + H2O = L-asparaginyl-tRNA(Asn) + L-glutamate + ADP + phosphate + 2 H(+). Its function is as follows. Allows the formation of correctly charged Asn-tRNA(Asn) or Gln-tRNA(Gln) through the transamidation of misacylated Asp-tRNA(Asn) or Glu-tRNA(Gln) in organisms which lack either or both of asparaginyl-tRNA or glutaminyl-tRNA synthetases. The reaction takes place in the presence of glutamine and ATP through an activated phospho-Asp-tRNA(Asn) or phospho-Glu-tRNA(Gln). This chain is Aspartyl/glutamyl-tRNA(Asn/Gln) amidotransferase subunit B, found in Arthrobacter sp. (strain FB24).